Here is a 101-residue protein sequence, read N- to C-terminus: Iron-sulfur cluster assembly protein CyaY (101 aa).

Belongs to the frataxin family.

Its function is as follows. Involved in iron-sulfur (Fe-S) cluster assembly. May act as a regulator of Fe-S biogenesis. This Rickettsia akari (strain Hartford) protein is Iron-sulfur cluster assembly protein CyaY.